A 284-amino-acid chain; its full sequence is Pantothenate synthetase (284 aa).

Position 30-37 (30-37 (MGNLHDGH)) interacts with ATP. The active-site Proton donor is the H37. Q61 serves as a coordination point for (R)-pantoate. Q61 contacts beta-alanine. 149 to 152 (GEKD) is an ATP binding site. Q155 contacts (R)-pantoate. Residues I178 and 186-189 (LSSR) each bind ATP.

It belongs to the pantothenate synthetase family. In terms of assembly, homodimer.

Its subcellular location is the cytoplasm. The catalysed reaction is (R)-pantoate + beta-alanine + ATP = (R)-pantothenate + AMP + diphosphate + H(+). The protein operates within cofactor biosynthesis; (R)-pantothenate biosynthesis; (R)-pantothenate from (R)-pantoate and beta-alanine: step 1/1. Catalyzes the condensation of pantoate with beta-alanine in an ATP-dependent reaction via a pantoyl-adenylate intermediate. This Salmonella paratyphi B (strain ATCC BAA-1250 / SPB7) protein is Pantothenate synthetase.